The sequence spans 37 residues: Delta/kappa-conotoxin Mo3964 (37 aa).

Cystine bridges form between Cys4–Cys12, Cys11–Cys27, and Cys21–Cys34.

As to expression, expressed by the venom duct.

The protein resides in the secreted. This toxin reduces the outward currents that are due to the opening of voltage-gated potassium channels in DRG neurons. In addition, leftward shift in the presence of this toxin is observed in averaged normalized conductance-voltage plot of outward sodium currents (Nav1.2/SCN2A). In Conus monile (Necklace cone), this protein is Delta/kappa-conotoxin Mo3964.